The sequence spans 126 residues: Large ribosomal subunit protein bL20 (126 aa).

It belongs to the bacterial ribosomal protein bL20 family.

Functionally, binds directly to 23S ribosomal RNA and is necessary for the in vitro assembly process of the 50S ribosomal subunit. It is not involved in the protein synthesizing functions of that subunit. In Frankia casuarinae (strain DSM 45818 / CECT 9043 / HFP020203 / CcI3), this protein is Large ribosomal subunit protein bL20.